The primary structure comprises 179 residues: Sec-independent protein translocase protein TatB (179 aa).

Residues 1-21 (MFDLGFWEVLIIMLIGLLILG) traverse the membrane as a helical segment. Basic and acidic residues-rich tracts occupy residues 75 to 86 (KDVEKNARRFEA) and 94 to 106 (TFRDVGRQADDAA). The interval 75–179 (KDVEKNARRF…QGGGGEEKRQ (105 aa)) is disordered.

This sequence belongs to the TatB family. In terms of assembly, the Tat system comprises two distinct complexes: a TatABC complex, containing multiple copies of TatA, TatB and TatC subunits, and a separate TatA complex, containing only TatA subunits. Substrates initially bind to the TatABC complex, which probably triggers association of the separate TatA complex to form the active translocon.

The protein localises to the cell inner membrane. In terms of biological role, part of the twin-arginine translocation (Tat) system that transports large folded proteins containing a characteristic twin-arginine motif in their signal peptide across membranes. Together with TatC, TatB is part of a receptor directly interacting with Tat signal peptides. TatB may form an oligomeric binding site that transiently accommodates folded Tat precursor proteins before their translocation. This chain is Sec-independent protein translocase protein TatB, found in Alkalilimnicola ehrlichii (strain ATCC BAA-1101 / DSM 17681 / MLHE-1).